Reading from the N-terminus, the 73-residue chain is Sec-independent protein translocase protein TatA (73 aa).

Residues 1–21 (MGSFSIWHWLIVLVIVMLVFG) form a helical membrane-spanning segment. Residues 43–73 (MKEGDDKAAPAKELRDSTTIDVDAKEKTRQQ) form a disordered region.

It belongs to the TatA/E family. The Tat system comprises two distinct complexes: a TatABC complex, containing multiple copies of TatA, TatB and TatC subunits, and a separate TatA complex, containing only TatA subunits. Substrates initially bind to the TatABC complex, which probably triggers association of the separate TatA complex to form the active translocon.

It localises to the cell inner membrane. Functionally, part of the twin-arginine translocation (Tat) system that transports large folded proteins containing a characteristic twin-arginine motif in their signal peptide across membranes. TatA could form the protein-conducting channel of the Tat system. The sequence is that of Sec-independent protein translocase protein TatA from Cupriavidus pinatubonensis (strain JMP 134 / LMG 1197) (Cupriavidus necator (strain JMP 134)).